Consider the following 691-residue polypeptide: DNA topoisomerase 1 (691 aa).

In terms of domain architecture, Toprim spans 3–114 (DYLVIVESPA…DCRVVFNEIT (112 aa)). Glutamate 9 and aspartate 82 together coordinate Mg(2+). Residues 129-558 (NMDLVDAQQA…NFYTDFEKRV (430 aa)) enclose the Topo IA-type catalytic domain. The segment at 163–168 (SAGRVQ) is interaction with DNA. The active-site O-(5'-phospho-DNA)-tyrosine intermediate is the tyrosine 298. 3 C4-type zinc fingers span residues 579 to 605 (CELC…FPDC), 619 to 647 (CPSC…YPDC), and 660 to 683 (CPKC…CVEC).

This sequence belongs to the type IA topoisomerase family. Monomer. Interacts with the RNA polymerase core. Requires Mg(2+) as cofactor.

It carries out the reaction ATP-independent breakage of single-stranded DNA, followed by passage and rejoining.. Functionally, releases the supercoiling and torsional tension of DNA, which is introduced during the DNA replication and transcription, by transiently cleaving and rejoining one strand of the DNA duplex. Introduces a single-strand break via transesterification at a target site in duplex DNA. The scissile phosphodiester is attacked by the catalytic tyrosine of the enzyme, resulting in the formation of a DNA-(5'-phosphotyrosyl)-enzyme intermediate and the expulsion of a 3'-OH DNA strand. The free DNA strand then undergoes passage around the unbroken strand, thus removing DNA supercoils. Finally, in the religation step, the DNA 3'-OH attacks the covalent intermediate to expel the active-site tyrosine and restore the DNA phosphodiester backbone. The chain is DNA topoisomerase 1 from Bacillus subtilis (strain 168).